The following is a 548-amino-acid chain: WEB family protein At1g12150 (548 aa).

Residues 71-544 (KEFMKIKQKL…ELQRWRQQEN (474 aa)) are a coiled coil. The segment covering 430-448 (VREEMKMISQKQESKKQDE) has biased composition (basic and acidic residues). A disordered region spans residues 430–455 (VREEMKMISQKQESKKQDEESSGSKI).

The protein belongs to the WEB family.

In Arabidopsis thaliana (Mouse-ear cress), this protein is WEB family protein At1g12150.